The chain runs to 181 residues: Translationally-controlled tumor protein homolog (181 aa).

Residues 1-181 enclose the TCTP domain; sequence MLIYKDIFTD…VKEAIIEEKC (181 aa).

It belongs to the TCTP family.

It localises to the cytoplasm. Its function is as follows. Involved in calcium binding and microtubule stabilization. This is Translationally-controlled tumor protein homolog (tct-1) from Caenorhabditis elegans.